Consider the following 707-residue polypeptide: Polyribonucleotide nucleotidyltransferase (707 aa).

Positions 484 and 490 each coordinate Mg(2+). One can recognise a KH domain in the interval 551 to 610; sequence PRVVRMVVNPEKIRDIIGPAGKTITKIISETGVKIDIEEDGRLYITAPNLEAGERAKQMI. In terms of domain architecture, S1 motif spans 620–688; it reads GGIYLGKVLR…KLGRIVLSRK (69 aa). Residues 688-707 are disordered; that stretch reads KDAMPDEEESDNRKSDNRKK. Basic and acidic residues predominate over residues 698–707; that stretch reads DNRKSDNRKK.

Belongs to the polyribonucleotide nucleotidyltransferase family. Mg(2+) serves as cofactor.

Its subcellular location is the cytoplasm. The enzyme catalyses RNA(n+1) + phosphate = RNA(n) + a ribonucleoside 5'-diphosphate. In terms of biological role, involved in mRNA degradation. Catalyzes the phosphorolysis of single-stranded polyribonucleotides processively in the 3'- to 5'-direction. The polypeptide is Polyribonucleotide nucleotidyltransferase (Caldanaerobacter subterraneus subsp. tengcongensis (strain DSM 15242 / JCM 11007 / NBRC 100824 / MB4) (Thermoanaerobacter tengcongensis)).